The sequence spans 524 residues: GMP synthase [glutamine-hydrolyzing] (524 aa).

The Glutamine amidotransferase type-1 domain occupies 9 to 207 (RILILDFGSQ…VIHICQCIPN (199 aa)). The Nucleophile role is filled by C86. Catalysis depends on residues H181 and E183. The GMPS ATP-PPase domain occupies 208-399 (WTTKHIIEDS…LGLPADLIYR (192 aa)). Position 235–241 (235–241 (SGGVDSA)) interacts with ATP.

In terms of assembly, homodimer.

The catalysed reaction is XMP + L-glutamine + ATP + H2O = GMP + L-glutamate + AMP + diphosphate + 2 H(+). Its pathway is purine metabolism; GMP biosynthesis; GMP from XMP (L-Gln route): step 1/1. In terms of biological role, catalyzes the synthesis of GMP from XMP. In Coxiella burnetii (strain RSA 493 / Nine Mile phase I), this protein is GMP synthase [glutamine-hydrolyzing].